A 517-amino-acid polypeptide reads, in one-letter code: T-complex protein 11-like protein 2 (517 aa).

A disordered region spans residues 1–59 (MPFNGEKQCVSEDQQSDSESSRFAEGVASLSDYECSRQSFTSDSSSKSSSPASTSPPRG). At Ser-16 the chain carries Phosphoserine. Low complexity predominate over residues 36-55 (SRQSFTSDSSSKSSSPASTS).

It belongs to the TCP11 family. In terms of assembly, interacts with FMNL2; this interaction promotes muscle-derived satellite cell (MDSC) migration and differentiation.

It localises to the cytoplasm. Its subcellular location is the cytoskeleton. Functionally, promotes the migration of muscle-derived satellite cells (MDSCs) during differentiation throught interaction with FMNL2 and therefore may participate in microfilament assembly. In Mus musculus (Mouse), this protein is T-complex protein 11-like protein 2.